Reading from the N-terminus, the 284-residue chain is MIETAAADILAGGMVPLEMTQTQIFEAVQSDTLLASSLWINIALAGLSILLFVYMGRNVEDPRAQLIFVATLMVPLVSISSYTGLVSGLTVSFLEMPAGHALAGQEVLTPWGRYLTWALSTPMILIAVGLLAGSNTTKLFTAVVADIGMCVTGLAAALTTSSYLLRWVWYAISCAFFVVVLYILLAEWAEDAEIAGTADIFNTLKVLTVVLWLGYPIFWALGAEGLAVLDVAITSWAYSGMDIVAKYLFAFLLLRWVVNNERTVADVASGLGSGSRGGAAPADD.

The Extracellular portion of the chain corresponds to 1-30 (MIETAAADILAGGMVPLEMTQTQIFEAVQS). The chain crosses the membrane as a helical span at residues 31-56 (DTLLASSLWINIALAGLSILLFVYMG). Topologically, residues 57 to 62 (RNVEDP) are cytoplasmic. Residues 63–86 (RAQLIFVATLMVPLVSISSYTGLV) form a helical membrane-spanning segment. Topologically, residues 87–110 (SGLTVSFLEMPAGHALAGQEVLTP) are extracellular. The chain crosses the membrane as a helical span at residues 111-132 (WGRYLTWALSTPMILIAVGLLA). Topologically, residues 133–135 (GSN) are cytoplasmic. A helical membrane pass occupies residues 136–159 (TTKLFTAVVADIGMCVTGLAAALT). Topologically, residues 160–162 (TSS) are extracellular. The chain crosses the membrane as a helical span at residues 163–185 (YLLRWVWYAISCAFFVVVLYILL). At 186 to 197 (AEWAEDAEIAGT) the chain is on the cytoplasmic side. The chain crosses the membrane as a helical span at residues 198–221 (ADIFNTLKVLTVVLWLGYPIFWAL). Topologically, residues 222–230 (GAEGLAVLD) are extracellular. A helical membrane pass occupies residues 231-259 (VAITSWAYSGMDIVAKYLFAFLLLRWVVN). Lys-246 carries the N6-(retinylidene)lysine modification. Residues 260 to 284 (NERTVADVASGLGSGSRGGAAPADD) are Cytoplasmic-facing.

The protein belongs to the archaeal/bacterial/fungal opsin family.

The protein localises to the cell membrane. Its function is as follows. Light-driven chloride pump. In Halobacterium sp. (strain SG1), this protein is Halorhodopsin (hop).